The chain runs to 358 residues: Chorismate synthase (358 aa).

Position 48 (arginine 48) interacts with NADP(+). FMN contacts are provided by residues 125–127, serine 277, 292–296, and arginine 318; these read RAS and KPIPS.

This sequence belongs to the chorismate synthase family. Homotetramer. FMNH2 is required as a cofactor.

The enzyme catalyses 5-O-(1-carboxyvinyl)-3-phosphoshikimate = chorismate + phosphate. It participates in metabolic intermediate biosynthesis; chorismate biosynthesis; chorismate from D-erythrose 4-phosphate and phosphoenolpyruvate: step 7/7. Its function is as follows. Catalyzes the anti-1,4-elimination of the C-3 phosphate and the C-6 proR hydrogen from 5-enolpyruvylshikimate-3-phosphate (EPSP) to yield chorismate, which is the branch point compound that serves as the starting substrate for the three terminal pathways of aromatic amino acid biosynthesis. This reaction introduces a second double bond into the aromatic ring system. The chain is Chorismate synthase from Desulfatibacillum aliphaticivorans.